Reading from the N-terminus, the 456-residue chain is Phospholipase A1 member A (456 aa).

A signal peptide spans 1-25; that stretch reads MRPGLWETCFWLWGPLLWLSIGSSG. The active-site Nucleophile is the Ser-166. Asp-190 (charge relay system) is an active-site residue. The cysteines at positions 245 and 258 are disulfide-linked. The active-site Charge relay system is the His-260. 2 disulfides stabilise this stretch: Cys-282-Cys-293 and Cys-296-Cys-304. Residue Asn-365 is glycosylated (N-linked (GlcNAc...) asparagine).

This sequence belongs to the AB hydrolase superfamily. Lipase family.

It is found in the secreted. The catalysed reaction is a 1,2-diacyl-sn-glycero-3-phospho-L-serine + H2O = a 2-acyl-sn-glycero-3-phospho-L-serine + a fatty acid + H(+). It catalyses the reaction 1,2-di-(9Z)-octadecenoyl-sn-glycero-3-phospho-L-serine + H2O = 2-(9Z-octadecenoyl)-sn-glycero-3-phospho-L-serine + (9Z)-octadecenoate + H(+). It carries out the reaction 1-hexadecanoyl-2-(5Z,8Z,11Z,14Z-eicosatetraenoyl)-sn-glycero-3-phospho-L-serine + H2O = 2-(5Z,8Z,11Z,14Z)-eicosatetraenoyl-sn-glycero-3-phospho-L-serine + hexadecanoate + H(+). The enzyme catalyses a 1-acyl-sn-glycero-3-phospho-L-serine + H2O = sn-glycero-3-phospho-L-serine + a fatty acid + H(+). The catalysed reaction is 1-(9Z-octadecenoyl)-sn-glycero-3-phospho-L-serine + H2O = sn-glycero-3-phospho-L-serine + (9Z)-octadecenoate + H(+). Functionally, hydrolyzes the ester bond of the acyl group attached at the sn-1 position of phosphatidylserines (phospholipase A1 activity) and 1-acyl-2-lysophosphatidylserines (lysophospholipase activity) in the pathway of phosphatidylserines acyl chain remodeling. Cleaves phosphatidylserines exposed on the outer leaflet of the plasma membrane of apoptotic cells producing 2-acyl-1-lysophosphatidylserines, which in turn enhance mast cell activation and histamine production. Has no activity toward other glycerophospholipids including phosphatidylcholines, phosphatidylethanolamines, phosphatidic acids or phosphatidylinositols, or glycerolipids such as triolein. This chain is Phospholipase A1 member A, found in Mus musculus (Mouse).